Consider the following 600-residue polypeptide: Chaperone protein DnaK (600 aa).

T175 bears the Phosphothreonine; by autocatalysis mark. The span at 569 to 578 shows a compositional bias: low complexity; it reads SFAQATAQQA. The segment at 569–600 is disordered; it reads SFAQATAQQANTSESDPKADDSNTIDAEIKQD. The segment covering 583–600 has biased composition (basic and acidic residues); that stretch reads SDPKADDSNTIDAEIKQD.

It belongs to the heat shock protein 70 family.

Functionally, acts as a chaperone. This is Chaperone protein DnaK from Mesomycoplasma hyopneumoniae (strain 7448) (Mycoplasma hyopneumoniae).